The chain runs to 156 residues: Small ribosomal subunit protein uS7 (156 aa).

This sequence belongs to the universal ribosomal protein uS7 family. As to quaternary structure, part of the 30S ribosomal subunit. Contacts proteins S9 and S11.

One of the primary rRNA binding proteins, it binds directly to 16S rRNA where it nucleates assembly of the head domain of the 30S subunit. Is located at the subunit interface close to the decoding center, probably blocks exit of the E-site tRNA. The protein is Small ribosomal subunit protein uS7 of Geobacillus thermodenitrificans (strain NG80-2).